A 499-amino-acid chain; its full sequence is Lysine--tRNA ligase (499 aa).

Residues E408 and E415 each coordinate Mg(2+).

This sequence belongs to the class-II aminoacyl-tRNA synthetase family. Homodimer. The cofactor is Mg(2+).

Its subcellular location is the cytoplasm. The enzyme catalyses tRNA(Lys) + L-lysine + ATP = L-lysyl-tRNA(Lys) + AMP + diphosphate. The polypeptide is Lysine--tRNA ligase (Agrobacterium fabrum (strain C58 / ATCC 33970) (Agrobacterium tumefaciens (strain C58))).